Reading from the N-terminus, the 286-residue chain is Putative 2-aminoethylphosphonate transport system permease protein PhnU (286 aa).

Helical transmembrane passes span 19 to 39 (WLLL…SLIV), 76 to 96 (FFAT…LVFI), 111 to 131 (FIAL…GSAG), 150 to 170 (FLYS…PLVM), 202 to 222 (VIFP…LLLT), and 254 to 274 (YTVA…LFSL). The ABC transmembrane type-1 domain maps to 68–275 (LLNTLQIAFF…VLSLGLFSLY (208 aa)).

Belongs to the binding-protein-dependent transport system permease family.

It is found in the cell inner membrane. Its function is as follows. Probably part of the PhnSTUV complex (TC 3.A.1.11.5) involved in 2-aminoethylphosphonate import. Probably responsible for the translocation of the substrate across the membrane. The chain is Putative 2-aminoethylphosphonate transport system permease protein PhnU (phnU) from Salmonella typhimurium (strain LT2 / SGSC1412 / ATCC 700720).